Reading from the N-terminus, the 579-residue chain is Folliculin (579 aa).

Residues 32-52 (GASCGDSIGQGEQAEDEEMGI) form a disordered region. In terms of domain architecture, uDENN FLCN/SMCR8-type spans 86-242 (RSLAAGHPGY…RNGNAARSLT (157 aa)). Positions 337 to 491 (NMVQRRMGVF…ILNKIEAALS (155 aa)) constitute a cDENN FLCN/SMCR8-type domain. In terms of domain architecture, dDENN FLCN/SMCR8-type spans 493 to 558 (ENLSMDVVDQ…LLKFWMTGLS (66 aa)).

The protein belongs to the folliculin family. In terms of assembly, component of the lysosomal folliculin complex (LFC).

Its subcellular location is the lysosome membrane. The protein localises to the cytoplasm. It localises to the cytosol. It is found in the cell projection. The protein resides in the cilium. Its subcellular location is the cytoskeleton. The protein localises to the microtubule organizing center. It localises to the centrosome. It is found in the spindle. The protein resides in the nucleus. With respect to regulation, GTPase-activating activity is inhibited in the folliculin complex (LFC), which stabilizes the GDP-bound state of RagA/RRAGA (or RagB/RRAGB), because Arg-164 is located far from the RagC/RRAGC or RagD/RRAGD nucleotide pocket. Disassembly of the LFC complex upon amino acid restimulation liberates the GTPase-activating activity. In terms of biological role, multi-functional protein, involved in both the cellular response to amino acid availability and in the regulation of glycolysis. GTPase-activating protein that plays a key role in the cellular response to amino acid availability through regulation of the non-canonical mTORC1 signaling cascade controlling the MiT/TFE factors tfeb and tfe3. Activates mTORC1 by acting as a GTPase-activating protein: specifically stimulates GTP hydrolysis by RagC/RRAGC or RagD/RRAGD, promoting the conversion to the GDP-bound state of RagC/RRAGC or RagD/RRAGD, and thereby activating the kinase activity of mTORC1. The GTPase-activating activity is inhibited during starvation and activated in presence of nutrients. Acts as a key component for non-canonical mTORC1-dependent control of the MiT/TFE factors tfeb and tfe3, while it is not involved in mTORC1-dependent phosphorylation of canonical RPS6KB1/S6K1 and EIF4EBP1/4E-BP1. In low-amino acid conditions, the lysosomal folliculin complex (LFC) is formed on the membrane of lysosomes, which inhibits the GTPase-activating activity of flcn, inactivates mTORC1 and maximizes nuclear translocation of tfeb and tfe3. Upon amino acid restimulation, RagA/RRAGA (or RagB/RRAGB) nucleotide exchange promotes disassembly of the LFC complex and liberates the GTPase-activating activity of flcn, leading to activation of mTORC1 and subsequent cytoplasmic retention of tfeb and tfe3. Required for the exit of hematopoietic stem cell from pluripotency by promoting mTOR-dependent cytoplasmic retention of tfe3, thereby increasing Wnt signaling. Acts as an inhibitor of browning of adipose tissue by regulating mTOR-dependent cytoplasmic retention of tfe3. In response to flow stress, regulates STK11/LKB1 accumulation and mTORC1 activation through primary cilia. Required for starvation-induced perinuclear clustering of lysosomes by promoting association of rilp with its effector rab34. Involved in the control of embryonic stem cells differentiation; together with lamtor1 it is necessary to recruit and activate RagC/RRAGC and RagD/RRAGD at the lysosomes, and to induce exit of embryonic stem cells from pluripotency via non-canonical, mTOR-independent tfe3 inactivation. Regulates glycolysis by binding to lactate dehydrogenase ldha, acting as an uncompetitive inhibitor. The polypeptide is Folliculin (Xenopus tropicalis (Western clawed frog)).